The chain runs to 120 residues: Glycine cleavage system H protein (120 aa).

The Lipoyl-binding domain maps to 17-99 (IATVGITSHA…QGAGWLYRMR (83 aa)). Lys58 is modified (N6-lipoyllysine).

Belongs to the GcvH family. The glycine cleavage system is composed of four proteins: P, T, L and H. (R)-lipoate is required as a cofactor.

In terms of biological role, the glycine cleavage system catalyzes the degradation of glycine. The H protein shuttles the methylamine group of glycine from the P protein to the T protein. The polypeptide is Glycine cleavage system H protein (Methylobacterium nodulans (strain LMG 21967 / CNCM I-2342 / ORS 2060)).